Consider the following 278-residue polypeptide: Probable septum site-determining protein MinC (278 aa).

The disordered stretch occupies residues 104–167 (RTQQSVDPAP…ASHTPAAPQS (64 aa)).

This sequence belongs to the MinC family. In terms of assembly, interacts with MinD and FtsZ.

Its function is as follows. Cell division inhibitor that blocks the formation of polar Z ring septums. Rapidly oscillates between the poles of the cell to destabilize FtsZ filaments that have formed before they mature into polar Z rings. Prevents FtsZ polymerization. The polypeptide is Probable septum site-determining protein MinC (Bordetella avium (strain 197N)).